Consider the following 295-residue polypeptide: MEKLRILICDGNTEADRASFKKFVGCAPSKQFESLLKNYNSQIRTEIAFPADPGPLMTLPLGAYDGILITGSNSHIYEAQPGNLRQIEFAQKAFASGTPMFGVCWGMQLAVVAAGGEVLPSRVADCSCETPFATGVELTSYGSGHPMHHSRTSGFDVFSFHSDEVTRLPGGAVVTARNRNFIQAVEIKHGRSTFWGVQYHPELSGWDQAGFLRESARSLVEDGSYETLNHVEHAAQAISMFKAGAQISEENLVHFEGVDTNSFEFRPLEILNWLDHLVIPTAKRKFGWGGGWLQK.

The region spanning 5-221 (RILICDGNTE…LRESARSLVE (217 aa)) is the Glutamine amidotransferase type-1 domain. The active-site Nucleophile is cysteine 104. Active-site residues include histidine 200 and glutamate 202.

It catalyses the reaction gamma-L-glutamyl-L-alaninol + H2O = L-alaninol + L-glutamate. Involved in the degradation of isopropylamine, which is a constituent of the herbicides atrazine. Catalyzes the hydrolysis of gamma-glutamyl-L-alaninol (GALO) to L-alaninol and L-glutamate. It can also uses gamma-glutamyl-isopropylamide, gamma-glutamyl-ethylamide, L-glutamine, and gamma-glutamyl-p-nitroanilide. The sequence is that of Gamma-glutamyl-L-1-hydroxyisopropylamide hydrolase (ipuF) from Pseudomonas sp.